Here is a 166-residue protein sequence, read N- to C-terminus: MFLGYSDCVDPGLAVYRVSRSRLKLMLSFVWLVGLRFHDCAAFESCCYDITEAESNKAISRDEAAFTSSVSTRTPSLAIAPPPDRSMLLSREEELVPWSRLIITKQFYGGLIFHTTWVTGFVLLGLLTLFASLFRVPQSICRFCIDRLRDIARPLKYRYQRLVATV.

In terms of assembly, interacts with host IQGAP1.

It is found in the host cytoplasm. Functionally, may play a role in rearrangement of cellular cytoskeleton towards an efficient viral assembly and spreading. In Human cytomegalovirus (strain Merlin) (HHV-5), this protein is Protein UL5 (UL5).